The sequence spans 345 residues: Dihydroorotase (345 aa).

Zn(2+) contacts are provided by His-13 and His-15. Substrate contacts are provided by residues 15–17 (HLR) and Asn-41. Lys-99, His-136, His-174, and Asp-247 together coordinate Zn(2+). Lys-99 carries the N6-carboxylysine modification. His-136 is a substrate binding site. Asp-247 is a catalytic residue. Positions 251 and 263 each coordinate substrate.

The protein belongs to the metallo-dependent hydrolases superfamily. DHOase family. Class II DHOase subfamily. Homodimer. Zn(2+) serves as cofactor.

The catalysed reaction is (S)-dihydroorotate + H2O = N-carbamoyl-L-aspartate + H(+). Its pathway is pyrimidine metabolism; UMP biosynthesis via de novo pathway; (S)-dihydroorotate from bicarbonate: step 3/3. Catalyzes the reversible cyclization of carbamoyl aspartate to dihydroorotate. This is Dihydroorotase from Halorhodospira halophila (strain DSM 244 / SL1) (Ectothiorhodospira halophila (strain DSM 244 / SL1)).